The sequence spans 269 residues: Chromosome-partitioning protein Spo0J (269 aa).

The tract at residues 1-20 is stimulates ATPase activity of Soj by 8%; sequence MSRKPSGLGRGLEALLPKTG. The H-T-H motif DNA-binding region spans 137–156; sequence QEEVARRVGKARSTVANALR. The tract at residues 223–269 is required for DNA-binding; may be responsible for dimerization; it reads PSPLSLELSRHLGLPVRVVGGKKGKVVIQYRSLEELEALLRRLGYQA.

The protein belongs to the ParB family. Homodimer, probably via the C-terminal 46 residues. Dimerization of the N-terminal H-T-H region may require DNA-binding. Probably interacts with ATPase Soj.

In terms of biological role, probably involved in chromosome partitioning. Binds to a plasmid centromere-like site parS. Stimulates the ATPase activity 10-fold of Soj; the first 20 residues may be responsible. The chain is Chromosome-partitioning protein Spo0J (spo0C) from Thermus thermophilus (strain ATCC BAA-163 / DSM 7039 / HB27).